The chain runs to 542 residues: Phosphoenolpyruvate carboxykinase (ATP) (542 aa).

Residues R67, Y208, and K214 each contribute to the substrate site. Residues K214, H233, and 249–257 (GLSGTGKTT) contribute to the ATP site. Mn(2+)-binding residues include K214 and H233. Residue D270 coordinates Mn(2+). Residues E298, R334, 450 to 451 (RI), and T456 contribute to the ATP site. Position 334 (R334) interacts with substrate.

The protein belongs to the phosphoenolpyruvate carboxykinase (ATP) family. Monomer. Mn(2+) serves as cofactor.

It is found in the cytoplasm. The catalysed reaction is oxaloacetate + ATP = phosphoenolpyruvate + ADP + CO2. The protein operates within carbohydrate biosynthesis; gluconeogenesis. Its function is as follows. Involved in the gluconeogenesis. Catalyzes the conversion of oxaloacetate (OAA) to phosphoenolpyruvate (PEP) through direct phosphoryl transfer between the nucleoside triphosphate and OAA. In Vibrio cholerae serotype O1 (strain ATCC 39541 / Classical Ogawa 395 / O395), this protein is Phosphoenolpyruvate carboxykinase (ATP).